Consider the following 273-residue polypeptide: Rhamnulose-1-phosphate aldolase (273 aa).

Residue Glu-117 is part of the active site. His-140, His-142, and His-211 together coordinate Zn(2+).

This sequence belongs to the aldolase class II family. RhaD subfamily. It depends on Zn(2+) as a cofactor.

Its subcellular location is the cytoplasm. The catalysed reaction is L-rhamnulose 1-phosphate = (S)-lactaldehyde + dihydroxyacetone phosphate. Its pathway is carbohydrate degradation; L-rhamnose degradation; glycerone phosphate from L-rhamnose: step 3/3. Its function is as follows. Catalyzes the reversible cleavage of L-rhamnulose-1-phosphate to dihydroxyacetone phosphate (DHAP) and L-lactaldehyde. The polypeptide is Rhamnulose-1-phosphate aldolase (Listeria monocytogenes serotype 4b (strain CLIP80459)).